We begin with the raw amino-acid sequence, 410 residues long: Regulator of microtubule dynamics protein 2 (410 aa).

A helical membrane pass occupies residues 9–28 (LILGIMVGTAGISLLLLWYH). Position 51 is a phosphoserine (Ser51). The stretch at 68 to 110 (FQERQLQILEKLNELLTNMEELKEEIRFLKEAIPKLEEYIQDE) forms a coiled coil. Ser121 is subject to Phosphoserine. Residues 122–131 (PQHRARKRRL) are compositionally biased toward basic residues. The segment at 122–164 (PQHRARKRRLPTIQSSATSNSSEEAESEGGYITANTDTEEQSF) is disordered. Thr139 carries the phosphothreonine modification. Phosphotyrosine is present on Tyr152. A phosphothreonine mark is found at Thr154 and Thr157.

Belongs to the RMDN family. Interacts with microtubules.

Its subcellular location is the membrane. It localises to the cytoplasm. The protein resides in the cytoskeleton. It is found in the spindle. The protein localises to the spindle pole. The sequence is that of Regulator of microtubule dynamics protein 2 (RMDN2) from Homo sapiens (Human).